The sequence spans 516 residues: 2-isopropylmalate synthase (516 aa).

The Pyruvate carboxyltransferase domain occupies 8–270 (IYIFDTTLRD…YTGIKTESIY (263 aa)). Positions 17, 205, 207, and 241 each coordinate Mn(2+). The regulatory domain stretch occupies residues 394 to 516 (KLIYLNVVSG…DAGKIKSEYE (123 aa)).

Belongs to the alpha-IPM synthase/homocitrate synthase family. LeuA type 1 subfamily. In terms of assembly, homodimer. Mn(2+) is required as a cofactor.

It localises to the cytoplasm. It carries out the reaction 3-methyl-2-oxobutanoate + acetyl-CoA + H2O = (2S)-2-isopropylmalate + CoA + H(+). It participates in amino-acid biosynthesis; L-leucine biosynthesis; L-leucine from 3-methyl-2-oxobutanoate: step 1/4. In terms of biological role, catalyzes the condensation of the acetyl group of acetyl-CoA with 3-methyl-2-oxobutanoate (2-ketoisovalerate) to form 3-carboxy-3-hydroxy-4-methylpentanoate (2-isopropylmalate). This Syntrophus aciditrophicus (strain SB) protein is 2-isopropylmalate synthase.